A 173-amino-acid chain; its full sequence is Large ribosomal subunit protein uL10 (173 aa).

The protein belongs to the universal ribosomal protein uL10 family. Part of the ribosomal stalk of the 50S ribosomal subunit. The N-terminus interacts with L11 and the large rRNA to form the base of the stalk. The C-terminus forms an elongated spine to which L12 dimers bind in a sequential fashion forming a multimeric L10(L12)X complex.

Forms part of the ribosomal stalk, playing a central role in the interaction of the ribosome with GTP-bound translation factors. The protein is Large ribosomal subunit protein uL10 of Bifidobacterium longum (strain DJO10A).